The primary structure comprises 391 residues: Uroporphyrinogen decarboxylase, chloroplastic (391 aa).

Substrate-binding positions include 71–75 (RQAGR), Phe-90, Ser-120, Asp-121, Tyr-198, Ser-253, and His-368.

This sequence belongs to the uroporphyrinogen decarboxylase family. In terms of assembly, homodimer.

Its subcellular location is the plastid. It localises to the chloroplast. It catalyses the reaction uroporphyrinogen III + 4 H(+) = coproporphyrinogen III + 4 CO2. Its pathway is porphyrin-containing compound metabolism; protoporphyrin-IX biosynthesis; coproporphyrinogen-III from 5-aminolevulinate: step 4/4. In terms of biological role, catalyzes the decarboxylation of four acetate groups of uroporphyrinogen-III to yield coproporphyrinogen-III. The protein is Uroporphyrinogen decarboxylase, chloroplastic (DCUP) of Nicotiana tabacum (Common tobacco).